Consider the following 307-residue polypeptide: Ribonuclease Z (307 aa).

7 residues coordinate Zn(2+): H63, H65, D67, H68, H141, D212, and H270. D67 (proton acceptor) is an active-site residue.

The protein belongs to the RNase Z family. As to quaternary structure, homodimer. Zn(2+) is required as a cofactor.

It carries out the reaction Endonucleolytic cleavage of RNA, removing extra 3' nucleotides from tRNA precursor, generating 3' termini of tRNAs. A 3'-hydroxy group is left at the tRNA terminus and a 5'-phosphoryl group is left at the trailer molecule.. In terms of biological role, zinc phosphodiesterase, which displays some tRNA 3'-processing endonuclease activity. Probably involved in tRNA maturation, by removing a 3'-trailer from precursor tRNA. The polypeptide is Ribonuclease Z (Bacillus cereus (strain B4264)).